The primary structure comprises 656 residues: MSLLLKMLLFSLFFFYMASISQCSDPTGGQFSFNGYLYTDGVADLNPDGLFKLITSKTQGGAGQVLYQFPLQFKNSPNGTVSSFSTTFVFAIVAVRKTIAGCGLSFNISPTKGLNSVPNIDHSNHSVSVGFHTAKSDKPDGEDVNLVGINIDSSKMDRNCSAGYYKDDGRLVNLDIASGKPIQVWIEYNNSTKQLDVTMHSIKISKPKIPLLSMRKDLSPYLHEYMYIGFTSVGSPTSSHYILGWSFNNKGAVSDINLSRLPKVPDEDQERSLSSKILAISLSISGVTLVIVLILGVMLFLKRKKFLEVIEDWEVQFGPHKFTYKDLFIATKGFKNSEVLGKGGFGKVFKGILPLSSIPIAVKKISHDSRQGMREFLAEIATIGRLRHPDLVRLLGYCRRKGELYLVYDFMPKGSLDKFLYNQPNQILDWSQRFNIIKDVASGLCYLHQQWVQVIIHRDIKPANILLDENMNAKLGDFGLAKLCDHGIDSQTSNVAGTFGYISPELSRTGKSSTSSDVFAFGVFMLEITCGRRPIGPRGSPSEMVLTDWVLDCWDSGDILQVVDEKLGHRYLAEQVTLVLKLGLLCSHPVAATRPSMSSVIQFLDGVATLPHNLLDLVNSRIINEGFDTLGVTTESMEASSNVSLVMTESFLSSGR.

An N-terminal signal peptide occupies residues 1–23; that stretch reads MSLLLKMLLFSLFFFYMASISQC. The Extracellular portion of the chain corresponds to 24–276; the sequence is SDPTGGQFSF…EDQERSLSSK (253 aa). The legume-lectin like stretch occupies residues 29–248; that stretch reads GQFSFNGYLY…SHYILGWSFN (220 aa). N-linked (GlcNAc...) asparagine glycans are attached at residues Asn78, Asn124, Asn159, Asn190, and Asn257. A helical transmembrane segment spans residues 277 to 297; it reads ILAISLSISGVTLVIVLILGV. Topologically, residues 298–656 are cytoplasmic; it reads MLFLKRKKFL…MTESFLSSGR (359 aa). Residues 334–615 enclose the Protein kinase domain; it reads FKNSEVLGKG…GVATLPHNLL (282 aa). ATP is bound by residues 340-348 and Lys363; that span reads LGKGGFGKV. The active-site Proton acceptor is the Asp459.

It in the C-terminal section; belongs to the protein kinase superfamily. Ser/Thr protein kinase family. In the N-terminal section; belongs to the leguminous lectin family.

The protein resides in the cell membrane. The catalysed reaction is L-seryl-[protein] + ATP = O-phospho-L-seryl-[protein] + ADP + H(+). It catalyses the reaction L-threonyl-[protein] + ATP = O-phospho-L-threonyl-[protein] + ADP + H(+). The sequence is that of Putative L-type lectin-domain containing receptor kinase V.2 (LECRK52) from Arabidopsis thaliana (Mouse-ear cress).